We begin with the raw amino-acid sequence, 286 residues long: 4-hydroxy-tetrahydrodipicolinate synthase (286 aa).

Residue Thr-42 participates in pyruvate binding. The active-site Proton donor/acceptor is the Tyr-129. Lys-157 functions as the Schiff-base intermediate with substrate in the catalytic mechanism. Val-196 lines the pyruvate pocket.

The protein belongs to the DapA family. As to quaternary structure, homotetramer; dimer of dimers.

The protein resides in the cytoplasm. It carries out the reaction L-aspartate 4-semialdehyde + pyruvate = (2S,4S)-4-hydroxy-2,3,4,5-tetrahydrodipicolinate + H2O + H(+). It participates in amino-acid biosynthesis; L-lysine biosynthesis via DAP pathway; (S)-tetrahydrodipicolinate from L-aspartate: step 3/4. In terms of biological role, catalyzes the condensation of (S)-aspartate-beta-semialdehyde [(S)-ASA] and pyruvate to 4-hydroxy-tetrahydrodipicolinate (HTPA). In Chlamydia muridarum (strain MoPn / Nigg), this protein is 4-hydroxy-tetrahydrodipicolinate synthase.